The sequence spans 261 residues: Kallikrein 1-related peptidase b21 (261 aa).

A signal peptide spans 1-17 (MRFLILFLALSLGEIDA). A propeptide spans 18–24 (APPVQSR) (activation peptide). Residues 25–258 (IVGGFNCEKN…FTSWIKDTMA (234 aa)) form the Peptidase S1 domain. Intrachain disulfides connect Cys31–Cys173, Cys50–Cys66, Cys152–Cys219, Cys184–Cys198, and Cys209–Cys234. Catalysis depends on His65, which acts as the Charge relay system. Asn102 is a glycosylation site (N-linked (GlcNAc...) asparagine). The Charge relay system role is filled by Asp120. Ser213 functions as the Charge relay system in the catalytic mechanism.

This sequence belongs to the peptidase S1 family. Kallikrein subfamily. In terms of tissue distribution, expressed in testis and submaxillary gland. In the testis, expression localized specifically to Leydig cells in the interstitial tissues.

The catalysed reaction is Preferential cleavage of Arg-|-Xaa bonds in small molecule substrates. Highly selective action to release kallidin (lysyl-bradykinin) from kininogen involves hydrolysis of Met-|-Xaa or Leu-|-Xaa.. With respect to regulation, inhibited by protease inhibitors diisopropylfluorophosphate, leupeptin, antipain, benzamidine, phenylmethylsulfonyl fluoride and soybean trypsin inhibitor. In terms of biological role, glandular kallikreins cleave Met-Lys and Arg-Ser bonds in kininogen to release Lys-bradykinin. Displays trypsin-like substrate specificity and shows activity towards casein, gelatin, fibronectin and IGFBP3. The protein is Kallikrein 1-related peptidase b21 (Klk1b21) of Mus musculus (Mouse).